The chain runs to 231 residues: NADH-ubiquinone oxidoreductase chain 4 (231 aa).

Helical transmembrane passes span 1-21, 34-54, 63-85, 89-111, 128-148, and 156-176; these read PIAG…YGII, MFLP…LTCL, IAYS…TPWG, AMAL…NTTY, ILPM…ATPP, and LLIM…LGLS.

Belongs to the complex I subunit 4 family.

It is found in the mitochondrion membrane. It catalyses the reaction a ubiquinone + NADH + 5 H(+)(in) = a ubiquinol + NAD(+) + 4 H(+)(out). Functionally, core subunit of the mitochondrial membrane respiratory chain NADH dehydrogenase (Complex I) that is believed to belong to the minimal assembly required for catalysis. Complex I functions in the transfer of electrons from NADH to the respiratory chain. The immediate electron acceptor for the enzyme is believed to be ubiquinone. This Bothriechis lateralis (Side-striped palm pitviper) protein is NADH-ubiquinone oxidoreductase chain 4 (MT-ND4).